A 173-amino-acid polypeptide reads, in one-letter code: Mitochondrial import inner membrane translocase subunit TIM22-1 (173 aa).

The transit peptide at 1 to 18 directs the protein to the mitochondrion; it reads MADSSAAEPTTGASSPPV. The disordered stretch occupies residues 1-26; the sequence is MADSSAAEPTTGASSPPVASDENSTQ. 4 consecutive transmembrane segments (helical) span residues 52–72, 101–119, 128–144, and 151–168; these read VTSG…LGAL, SCKT…ECIV, TVNT…SMSA, and ACIG…IEKF.

Belongs to the Tim17/Tim22/Tim23 family. In terms of tissue distribution, expressed in young cotyledons, roots, flowers and leaves.

Its subcellular location is the mitochondrion inner membrane. Essential core component of the TIM22 complex, a complex that mediates the import and insertion of multi-pass transmembrane proteins into the mitochondrial inner membrane. In Arabidopsis thaliana (Mouse-ear cress), this protein is Mitochondrial import inner membrane translocase subunit TIM22-1 (TIM22-1).